The chain runs to 103 residues: UPF0058 protein MJ1205 (103 aa).

This sequence belongs to the UPF0058 family.

The polypeptide is UPF0058 protein MJ1205 (Methanocaldococcus jannaschii (strain ATCC 43067 / DSM 2661 / JAL-1 / JCM 10045 / NBRC 100440) (Methanococcus jannaschii)).